A 624-amino-acid chain; its full sequence is tRNA uridine 5-carboxymethylaminomethyl modification enzyme MnmG (624 aa).

Residues 16 to 21, Val-128, and Ser-183 each bind FAD; that span reads GAGHAG. 275 to 289 provides a ligand contact to NAD(+); the sequence is GPRYCPSIEDKVVRF. Residue Gln-372 participates in FAD binding.

This sequence belongs to the MnmG family. As to quaternary structure, homodimer. Heterotetramer of two MnmE and two MnmG subunits. Requires FAD as cofactor.

It localises to the cytoplasm. Functionally, NAD-binding protein involved in the addition of a carboxymethylaminomethyl (cmnm) group at the wobble position (U34) of certain tRNAs, forming tRNA-cmnm(5)s(2)U34. The polypeptide is tRNA uridine 5-carboxymethylaminomethyl modification enzyme MnmG (Geobacter metallireducens (strain ATCC 53774 / DSM 7210 / GS-15)).